A 103-amino-acid chain; its full sequence is Translation initiation factor 1A (103 aa).

One can recognise an S1-like domain in the interval 11–86; the sequence is TRVRTPRENE…EKCDVIWRYT (76 aa).

It belongs to the eIF-1A family.

Seems to be required for maximal rate of protein biosynthesis. Enhances ribosome dissociation into subunits and stabilizes the binding of the initiator Met-tRNA(I) to 40 S ribosomal subunits. This chain is Translation initiation factor 1A (eIF1A), found in Methanococcus maripaludis (strain C5 / ATCC BAA-1333).